The sequence spans 513 residues: Putative ribose/galactose/methyl galactoside import ATP-binding protein 2 (513 aa).

ABC transporter domains lie at 24-260 (LTAE…VGRE) and 270-510 (VPIG…VMEL). 56–63 (GENGAGKS) serves as a coordination point for ATP.

Belongs to the ABC transporter superfamily. Carbohydrate importer 2 (CUT2) (TC 3.A.1.2) family.

The protein localises to the cell inner membrane. The catalysed reaction is D-ribose(out) + ATP + H2O = D-ribose(in) + ADP + phosphate + H(+). It catalyses the reaction D-galactose(out) + ATP + H2O = D-galactose(in) + ADP + phosphate + H(+). Functionally, part of an ABC transporter complex involved in carbohydrate import. Could be involved in ribose, galactose and/or methyl galactoside import. Responsible for energy coupling to the transport system. The sequence is that of Putative ribose/galactose/methyl galactoside import ATP-binding protein 2 from Rhizobium meliloti (strain 1021) (Ensifer meliloti).